The primary structure comprises 542 residues: FACT complex subunit POB3 (542 aa).

A disordered region spans residues arginine 458–alanine 542. Acidic residues-rich tracts occupy residues aspartate 477–serine 514 and serine 521–aspartate 530.

This sequence belongs to the SSRP1 family. As to quaternary structure, forms a stable heterodimer with SPT16. The SPT16-POB3 dimer weakly associates with multiple molecules of NHP6 to form the FACT complex.

It localises to the nucleus. The protein localises to the chromosome. Component of the FACT complex, a general chromatin factor that acts to reorganize nucleosomes. The FACT complex is involved in multiple processes that require DNA as a template such as mRNA elongation, DNA replication and DNA repair. During transcription elongation the FACT complex acts as a histone chaperone that both destabilizes and restores nucleosomal structure. It facilitates the passage of RNA polymerase II and transcription by promoting the dissociation of one histone H2A-H2B dimer from the nucleosome, then subsequently promotes the reestablishment of the nucleosome following the passage of RNA polymerase II. This Eremothecium gossypii (strain ATCC 10895 / CBS 109.51 / FGSC 9923 / NRRL Y-1056) (Yeast) protein is FACT complex subunit POB3 (POB3).